Here is a 66-residue protein sequence, read N- to C-terminus: Nigrocin-2GRa (66 aa).

Residues 1–22 form the signal peptide; it reads MFTLKKSQLLLFFPGTINLSLC. A propeptide spanning residues 23–45 is cleaved from the precursor; it reads QDETNAEEERRDEEVAKMEEIKR. Cysteines 60 and 66 form a disulfide.

As to expression, expressed by the skin glands.

It is found in the secreted. Its function is as follows. Antimicrobial peptide active at least against the Gram-positive bacterium S.aureus but with otherwise unclear activity spectrum. Lacks hemolytic activity against rabbit or human erythrocytes. The protein is Nigrocin-2GRa of Odorrana grahami (Yunnanfu frog).